Here is a 335-residue protein sequence, read N- to C-terminus: Pyridoxal 5'-phosphate synthase subunit PdxS (335 aa).

Position 59 (Asp59) interacts with D-ribose 5-phosphate. Residue Lys116 is the Schiff-base intermediate with D-ribose 5-phosphate of the active site. Residue Gly188 coordinates D-ribose 5-phosphate. A D-glyceraldehyde 3-phosphate-binding site is contributed by Lys200. D-ribose 5-phosphate contacts are provided by residues Gly253 and 274–275; that span reads GS.

Belongs to the PdxS/SNZ family. In terms of assembly, in the presence of PdxT, forms a dodecamer of heterodimers.

It carries out the reaction aldehydo-D-ribose 5-phosphate + D-glyceraldehyde 3-phosphate + L-glutamine = pyridoxal 5'-phosphate + L-glutamate + phosphate + 3 H2O + H(+). It functions in the pathway cofactor biosynthesis; pyridoxal 5'-phosphate biosynthesis. Catalyzes the formation of pyridoxal 5'-phosphate from ribose 5-phosphate (RBP), glyceraldehyde 3-phosphate (G3P) and ammonia. The ammonia is provided by the PdxT subunit. Can also use ribulose 5-phosphate and dihydroxyacetone phosphate as substrates, resulting from enzyme-catalyzed isomerization of RBP and G3P, respectively. In Desulfurococcus amylolyticus (strain DSM 18924 / JCM 16383 / VKM B-2413 / 1221n) (Desulfurococcus kamchatkensis), this protein is Pyridoxal 5'-phosphate synthase subunit PdxS.